Consider the following 604-residue polypeptide: Elongation factor 4 (604 aa).

Positions 10–191 constitute a tr-type G domain; that stretch reads KNIRNFSIIA…KIITTIPAPS (182 aa). Residues 22–27 and 138–141 contribute to the GTP site; these read DHGKST and NKID.

It belongs to the TRAFAC class translation factor GTPase superfamily. Classic translation factor GTPase family. LepA subfamily.

It localises to the cell inner membrane. It carries out the reaction GTP + H2O = GDP + phosphate + H(+). Its function is as follows. Required for accurate and efficient protein synthesis under certain stress conditions. May act as a fidelity factor of the translation reaction, by catalyzing a one-codon backward translocation of tRNAs on improperly translocated ribosomes. Back-translocation proceeds from a post-translocation (POST) complex to a pre-translocation (PRE) complex, thus giving elongation factor G a second chance to translocate the tRNAs correctly. Binds to ribosomes in a GTP-dependent manner. In Helicobacter pylori (strain J99 / ATCC 700824) (Campylobacter pylori J99), this protein is Elongation factor 4.